Reading from the N-terminus, the 37-residue chain is Cytochrome b6-f complex subunit 5 (37 aa).

A helical transmembrane segment spans residues 5–25 (LLSGIVLGLIPITLAGLFVTA).

The protein belongs to the PetG family. In terms of assembly, the 4 large subunits of the cytochrome b6-f complex are cytochrome b6, subunit IV (17 kDa polypeptide, PetD), cytochrome f and the Rieske protein, while the 4 small subunits are PetG, PetL, PetM and PetN. The complex functions as a dimer.

The protein localises to the plastid. The protein resides in the chloroplast thylakoid membrane. Component of the cytochrome b6-f complex, which mediates electron transfer between photosystem II (PSII) and photosystem I (PSI), cyclic electron flow around PSI, and state transitions. PetG is required for either the stability or assembly of the cytochrome b6-f complex. The sequence is that of Cytochrome b6-f complex subunit 5 from Angiopteris evecta (Mule's foot fern).